Reading from the N-terminus, the 172-residue chain is 3-hydroxydecanoyl-[acyl-carrier-protein] dehydratase (172 aa).

Histidine 71 is an active-site residue.

This sequence belongs to the thioester dehydratase family. FabA subfamily. Homodimer.

The protein resides in the cytoplasm. It catalyses the reaction a (3R)-hydroxyacyl-[ACP] = a (2E)-enoyl-[ACP] + H2O. The catalysed reaction is (3R)-hydroxydecanoyl-[ACP] = (2E)-decenoyl-[ACP] + H2O. It carries out the reaction (2E)-decenoyl-[ACP] = (3Z)-decenoyl-[ACP]. It functions in the pathway lipid metabolism; fatty acid biosynthesis. In terms of biological role, necessary for the introduction of cis unsaturation into fatty acids. Catalyzes the dehydration of (3R)-3-hydroxydecanoyl-ACP to E-(2)-decenoyl-ACP and then its isomerization to Z-(3)-decenoyl-ACP. Can catalyze the dehydratase reaction for beta-hydroxyacyl-ACPs with saturated chain lengths up to 16:0, being most active on intermediate chain length. This Aliivibrio salmonicida (strain LFI1238) (Vibrio salmonicida (strain LFI1238)) protein is 3-hydroxydecanoyl-[acyl-carrier-protein] dehydratase.